The chain runs to 89 residues: Small ribosomal subunit protein uS15 (89 aa).

This sequence belongs to the universal ribosomal protein uS15 family. As to quaternary structure, part of the 30S ribosomal subunit. Forms a bridge to the 50S subunit in the 70S ribosome, contacting the 23S rRNA.

In terms of biological role, one of the primary rRNA binding proteins, it binds directly to 16S rRNA where it helps nucleate assembly of the platform of the 30S subunit by binding and bridging several RNA helices of the 16S rRNA. Forms an intersubunit bridge (bridge B4) with the 23S rRNA of the 50S subunit in the ribosome. The protein is Small ribosomal subunit protein uS15 of Alcanivorax borkumensis (strain ATCC 700651 / DSM 11573 / NCIMB 13689 / SK2).